A 369-amino-acid chain; its full sequence is Nudix hydrolase 8 (369 aa).

A Nudix hydrolase domain is found at 188–318 (SHQVGVGGFV…GDKMFKRVIE (131 aa)). The Nudix box motif lies at 225–246 (GFINESEEIFSGAVREVKEETG). Glutamate 240 and glutamate 244 together coordinate Mg(2+).

Belongs to the Nudix hydrolase family. It depends on Mg(2+) as a cofactor. Mn(2+) is required as a cofactor. Expressed in roots, stems and, at lower level, leaves.

Its function is as follows. Probably mediates the hydrolysis of some nucleoside diphosphate derivatives. May be involved in plant immunity and act as a positive regulator of defense response through salicylic acid (SA) signaling. The protein is Nudix hydrolase 8 (NUDT8) of Arabidopsis thaliana (Mouse-ear cress).